The primary structure comprises 300 residues: MNQTYGRLVSRAAIAATAMASALLLIKIFAWWYTGSVSILAALVDSLVDIAASLTNLLVVRYSLQPADDEHTFGHGKAESLAALAQSMFISGSALFLFLTSIQNLIKPTPMNDPGVGIGVTVIALICTIILVTFQRWVVRKTQSQAVRADMLHYQSDVMMNGAILIALGLSWYGWHRADALFALGIGIYILYSALRMGYEAVQSLLDRALPDAERQEIIDIVTSWPGVSGAHDLRTRQSGPTRFIQIHLEMEDNLPLVQAHFVADQVEQAILQRFPGSDVIIHQDPCSVVPREGRKFELV.

The helical transmembrane segment at leucine 24–valine 44 threads the bilayer. Zn(2+) contacts are provided by aspartate 45 and aspartate 49. Helical transmembrane passes span alanine 82–isoleucine 102 and proline 114–phenylalanine 134. Zn(2+) is bound by residues histidine 153 and aspartate 157. 2 helical membrane-spanning segments follow: residues serine 156–histidine 176 and alanine 178–glycine 198.

It belongs to the cation diffusion facilitator (CDF) transporter (TC 2.A.4) family. FieF subfamily. In terms of assembly, homodimer.

It is found in the cell inner membrane. The catalysed reaction is Zn(2+)(in) + H(+)(out) = Zn(2+)(out) + H(+)(in). It carries out the reaction Cd(2+)(in) + H(+)(out) = Cd(2+)(out) + H(+)(in). The enzyme catalyses Fe(2+)(in) + H(+)(out) = Fe(2+)(out) + H(+)(in). In terms of biological role, divalent metal cation transporter which exports Zn(2+), Cd(2+) and possibly Fe(2+). May be involved in zinc and iron detoxification by efflux. This Salmonella enteritidis PT4 (strain P125109) protein is Cation-efflux pump FieF.